A 326-amino-acid polypeptide reads, in one-letter code: Meso-diaminopimelate D-dehydrogenase (326 aa).

Residues 11–14 (YGNL), 35–37 (TRR), 69–72 (CGGS), 92–94 (SFD), and 121–125 (VGWDP) contribute to the NADP(+) site. Substrate is bound by residues aspartate 94, aspartate 124, tryptophan 148, 154–155 (QG), threonine 173, arginine 199, histidine 249, and asparagine 276.

It belongs to the diaminopimelate dehydrogenase family. In terms of assembly, homodimer.

It carries out the reaction meso-2,6-diaminopimelate + NADP(+) + H2O = (S)-2-amino-6-oxoheptanedioate + NH4(+) + NADPH + H(+). Its pathway is amino-acid biosynthesis; L-lysine biosynthesis via DAP pathway; DL-2,6-diaminopimelate from (S)-tetrahydrodipicolinate: step 1/1. The enzyme is completely inhibited by p-chloromercuribenzoate and HgCl(2) in vitro. Thioglycollate, L-cysteine and Cu(2+) also strongly inhibit the enzyme. In terms of biological role, catalyzes the reversible NADPH-dependent reductive amination of L-2-amino-6-oxopimelate, the acyclic form of L-tetrahydrodipicolinate, to generate the meso compound, D,L-2,6-diaminopimelate. Probably plays a role in lysine biosynthesis. Is highly specific for meso-2,6-diaminopimelate as the electron donor, since the following amino acids are inert for the oxidative deamination reaction: DL-2-aminopimelate, D-glutamate, L-glutamate, D-aspartate, L-aspartate, D-alanine, L-alanine, D-valine, L-valine, D-lysine, L-lysine, D-phenylalanine, L-phenylalanine, D-leucine, L-leucine, D-threonine, L-threonine, D-serine, L-serine, D-tryptophan, L-tryptophan, D-cysteine, L-cysteine, D-histidine, L-histidine, D-methionine, D-arginine, D-proline, D-asparagine, D-glutamine, D-isoleucine and D-ornithine. Moreover, exclusively uses NADP as the electron acceptor for the oxidative deamination of meso-DAP; NAD is inert. This is Meso-diaminopimelate D-dehydrogenase (ddh) from Ureibacillus thermosphaericus.